The following is a 366-amino-acid chain: Outer membrane protein IIIA (366 aa).

The N-terminal stretch at 1–22 is a signal peptide; it reads MNIRMVLLASAAAFAASTPVLA.

Belongs to the alphaproteobacteria porin family. In terms of assembly, forms calcium-stabilized oligomers. Attached covalently to peptidoglycan.

The protein localises to the cell outer membrane. Its function is as follows. May act as an outer membrane pore. The chain is Outer membrane protein IIIA (ropA) from Rhizobium leguminosarum bv. viciae.